The chain runs to 146 residues: Large ribosomal subunit protein uL15 (146 aa).

The segment at 1–54 (MTIKLHDLRPAPGSKTPRTRVGRGEGSKGKTAGRGTKGTKARKQVPTTFEGGQM) is disordered.

The protein belongs to the universal ribosomal protein uL15 family. As to quaternary structure, part of the 50S ribosomal subunit.

In terms of biological role, binds to the 23S rRNA. The sequence is that of Large ribosomal subunit protein uL15 from Mycobacterium marinum (strain ATCC BAA-535 / M).